Consider the following 323-residue polypeptide: ADP-L-glycero-D-manno-heptose-6-epimerase (323 aa).

Residues 10 to 11 (FI), 31 to 32 (DN), Lys38, Lys53, 75 to 79 (EGACS), and Asn92 contribute to the NADP(+) site. Tyr139 (proton acceptor) is an active-site residue. Residue Lys143 coordinates NADP(+). A substrate-binding site is contributed by Asn168. NADP(+) is bound by residues Val169 and Lys177. The active-site Proton acceptor is the Lys177. Residues Asp179, Lys186, 200 to 203 (FGAY), Arg213, and Tyr277 contribute to the substrate site.

The protein belongs to the NAD(P)-dependent epimerase/dehydratase family. HldD subfamily. As to quaternary structure, homopentamer. The cofactor is NADP(+).

The enzyme catalyses ADP-D-glycero-beta-D-manno-heptose = ADP-L-glycero-beta-D-manno-heptose. It participates in nucleotide-sugar biosynthesis; ADP-L-glycero-beta-D-manno-heptose biosynthesis; ADP-L-glycero-beta-D-manno-heptose from D-glycero-beta-D-manno-heptose 7-phosphate: step 4/4. Catalyzes the interconversion between ADP-D-glycero-beta-D-manno-heptose and ADP-L-glycero-beta-D-manno-heptose via an epimerization at carbon 6 of the heptose. In Hydrogenovibrio crunogenus (strain DSM 25203 / XCL-2) (Thiomicrospira crunogena), this protein is ADP-L-glycero-D-manno-heptose-6-epimerase.